A 141-amino-acid chain; its full sequence is Putative pre-16S rRNA nuclease (141 aa).

This sequence belongs to the YqgF nuclease family.

Its subcellular location is the cytoplasm. Its function is as follows. Could be a nuclease involved in processing of the 5'-end of pre-16S rRNA. This chain is Putative pre-16S rRNA nuclease, found in Cupriavidus pinatubonensis (strain JMP 134 / LMG 1197) (Cupriavidus necator (strain JMP 134)).